We begin with the raw amino-acid sequence, 270 residues long: 3-phenylpropionate-dihydrodiol/cinnamic acid-dihydrodiol dehydrogenase (270 aa).

Position 10–34 (10–34) interacts with NAD(+); the sequence is FITGGGSGLGLALVERFIEEGAQVA. S143 contacts substrate. Y156 serves as the catalytic Proton acceptor.

Belongs to the short-chain dehydrogenases/reductases (SDR) family.

It catalyses the reaction 3-(cis-5,6-dihydroxycyclohexa-1,3-dien-1-yl)propanoate + NAD(+) = 3-(2,3-dihydroxyphenyl)propanoate + NADH + H(+). It carries out the reaction (2E)-3-(cis-5,6-dihydroxycyclohexa-1,3-dien-1-yl)prop-2-enoate + NAD(+) = (2E)-3-(2,3-dihydroxyphenyl)prop-2-enoate + NADH + H(+). It functions in the pathway aromatic compound metabolism; 3-phenylpropanoate degradation. Converts 3-phenylpropionate-dihydrodiol (PP-dihydrodiol) and cinnamic acid-dihydrodiol (CI-dihydrodiol) into 3-(2,3-dihydroxylphenyl)propanoic acid (DHPP) and 2,3-dihydroxicinnamic acid (DHCI), respectively. The chain is 3-phenylpropionate-dihydrodiol/cinnamic acid-dihydrodiol dehydrogenase from Shigella sonnei (strain Ss046).